A 215-amino-acid polypeptide reads, in one-letter code: MRTGIIAQKIGMTSVFNDKGERISLTLVKVDDCQVVGHKTLEKHGYNALVIGVKDKKISRVTKPMRQVFANAKISPKTKLKEFRISEENFIDIAASLEVDHFTAGQFVDITATTIGKGFAGSMKRHNFRGLEASHGVSISHRSHGSTGQRQDPGKVFKGKKMAGHMGCNQVTIQNLKIFAVDKERKLIMIQGSIPGHKNSYLSVKDAIKKISITV.

The disordered stretch occupies residues 136-155; that stretch reads GVSISHRSHGSTGQRQDPGK. At glutamine 151 the chain carries N5-methylglutamine.

The protein belongs to the universal ribosomal protein uL3 family. As to quaternary structure, part of the 50S ribosomal subunit. Forms a cluster with proteins L14 and L19. In terms of processing, methylated by PrmB.

One of the primary rRNA binding proteins, it binds directly near the 3'-end of the 23S rRNA, where it nucleates assembly of the 50S subunit. The protein is Large ribosomal subunit protein uL3 of Rickettsia rickettsii (strain Iowa).